A 381-amino-acid chain; its full sequence is Creatine kinase B-type (381 aa).

Position 4 is a phosphoserine (serine 4). The Phosphagen kinase N-terminal domain maps to 11-98; the sequence is KLRFPAEDEF…FDPIIEDRHG (88 aa). Threonine 35 carries the post-translational modification Phosphothreonine. Lysine 45 participates in a covalent cross-link: Glycyl lysine isopeptide (Lys-Gly) (interchain with G-Cter in ubiquitin). Valine 72 serves as a coordination point for creatine. The segment covering 96-110 has biased composition (basic and acidic residues); the sequence is RHGGYQPSDEHKTDL. Residues 96–122 form a disordered region; that stretch reads RHGGYQPSDEHKTDLNPDNLQGGDDLD. A Glycyl lysine isopeptide (Lys-Gly) (interchain with G-Cter in ubiquitin) cross-link involves residue lysine 107. Tyrosine 125 carries the phosphotyrosine modification. Positions 125 to 367 constitute a Phosphagen kinase C-terminal domain; the sequence is YVLSSRVRTG…KLLIEMEQRL (243 aa). ATP contacts are provided by residues 128–132, arginine 130, arginine 132, and histidine 191; that span reads SSRVR. The segment at 130 to 138 is internal MTS-like signal; it reads RVRTGRSIR. Position 199 is a phosphoserine (serine 199). Glutamate 232 contacts creatine. Residue arginine 236 coordinates ATP. The residue at position 269 (tyrosine 269) is a 3'-nitrotyrosine. Serine 285 serves as a coordination point for creatine. Position 292 (arginine 292) interacts with ATP. Serine 309 is subject to Phosphoserine. ATP is bound by residues arginine 320, 320–325, and aspartate 335; that span reads RGTGGV. Threonine 322 carries the post-translational modification Phosphothreonine. A Glycyl lysine isopeptide (Lys-Gly) (interchain with G-Cter in ubiquitin) cross-link involves residue lysine 381.

Belongs to the ATP:guanido phosphotransferase family. As to quaternary structure, dimer of identical or non-identical chains, which can be either B (brain type) or M (muscle type). With MM being the major form in skeletal muscle and myocardium, MB existing in myocardium, and BB existing in many tissues, especially brain. Interacts with SLC12A6 (via C-terminus); the interaction may be required for SLC12A6 potassium-chloride cotransport activity. Post-translationally, ubiquitinated by the ECS(ASB9) complex, leading to its degradation by the proteasome. In terms of tissue distribution, in the kidney localized primarily in the outer medulla in the thick ascending limb and distal convoluted tubule.

It is found in the cytoplasm. It localises to the cytosol. Its subcellular location is the mitochondrion. The protein localises to the cell membrane. It carries out the reaction creatine + ATP = N-phosphocreatine + ADP + H(+). In terms of biological role, reversibly catalyzes the transfer of phosphate between ATP and various phosphogens (e.g. creatine phosphate). Creatine kinase isoenzymes play a central role in energy transduction in tissues with large, fluctuating energy demands, such as skeletal muscle, heart, brain and spermatozoa. Acts as a key regulator of adaptive thermogenesis as part of the futile creatine cycle: localizes to the mitochondria of thermogenic fat cells and acts by mediating phosphorylation of creatine to initiate a futile cycle of creatine phosphorylation and dephosphorylation. During the futile creatine cycle, creatine and N-phosphocreatine are in a futile cycle, which dissipates the high energy charge of N-phosphocreatine as heat without performing any mechanical or chemical work. The polypeptide is Creatine kinase B-type (Ckb) (Rattus norvegicus (Rat)).